A 424-amino-acid polypeptide reads, in one-letter code: UDP-galactose transporter homolog 1 (424 aa).

Transmembrane regions (helical) follow at residues 57–77, 107–127, 144–164, 173–193, 197–217, and 234–254; these read LWQLAFCVAGIYASFLSWGVL, IVLNTIQSTFAAVTGFLYLYF, IIFPLVLVSISSSLASPFGYA, TFILAKSCKLLPVMFLHLTIF, YPLYKYGVVLLVTLGVATFTL, and TSGSSAWGIFLLSINLLLDGL. N-linked (GlcNAc...) asparagine glycosylation is present at N256. Transmembrane regions (helical) follow at residues 293-313, 337-357, and 380-400; these read LLIMPHLSSTGILHAILPVPI, SVLGFAAFGAMGQLFIFYTLS, and VFWFGHSLSAGQWLGIGLVFG.

This sequence belongs to the nucleotide-sugar transporter family. SLC35B subfamily.

The protein localises to the endoplasmic reticulum membrane. Its function is as follows. May be involved in specific transport of UDP-Gal from the cytosol to the Golgi lumen. Involved in the maintenance of optimal conditions for the folding of secretory pathway proteins in the endoplasmic reticulum. In Emericella nidulans (strain FGSC A4 / ATCC 38163 / CBS 112.46 / NRRL 194 / M139) (Aspergillus nidulans), this protein is UDP-galactose transporter homolog 1 (hut1).